We begin with the raw amino-acid sequence, 552 residues long: MSETETRPTNFIRQIIDEDLKSGKHSSVHTRFPPEPNGYLHIGHAKSICLNFGIAQDYQGQCNLRFDDTNPEKEDIEYVESIKNDVKWLGFDWSGDIHYSSNYFDKLYDYAVELIEKGLAYVDELTSDQIREYRGSLKEPGKNSPYRDRSVEENLALFEQMRDGKFKEGTICLRAKIDMASSFIVMRDPVIYRIRFATHHQTGDKWCIYPMYDFTHCISDALEGITHSICTLEFQDNRRLYDWVLENITIDCQPHQYEFSRLNLEYTIMSKRKLNELVTEKLVNGWDDPRMPTVSGLRRRGFTAGSIREFCKRIGVTKQENMIEFGSLESCIRDDLNENAPRAMAVLEPVKVVIENYEEGKVETLNVANHPNKPEMGTREVPFTREIYIEQDDFREEANKKYKRLVLGKEVRLRGAYVIQANRIEKDEAGNITTIFCSYDTETLGKNPADGRKVKGVIHWVSADKAFPAEIRLYDRLFTVPNSAALEDFSESINPESLITKQGFVEPSLVTAEAEAGYQFERTGYFCIDNKDSTPEALVFNRTVGLRDTWEG.

Residues proline 34–histidine 44 carry the 'HIGH' region motif. ATP is bound by residues glutamate 35 to asparagine 37 and histidine 41 to serine 47. L-glutamine-binding residues include aspartate 67 and tyrosine 212. ATP contacts are provided by residues threonine 231, arginine 261 to leucine 262, and methionine 269 to lysine 271. The 'KMSKS' region motif lies at isoleucine 268–arginine 272.

It belongs to the class-I aminoacyl-tRNA synthetase family. Monomer.

It is found in the cytoplasm. It carries out the reaction tRNA(Gln) + L-glutamine + ATP = L-glutaminyl-tRNA(Gln) + AMP + diphosphate. This chain is Glutamine--tRNA ligase, found in Aliivibrio salmonicida (strain LFI1238) (Vibrio salmonicida (strain LFI1238)).